We begin with the raw amino-acid sequence, 167 residues long: Lipoprotein signal peptidase (167 aa).

4 helical membrane passes run 5-25 (ICSTGLRWLWLVVVVLILDLG), 42-62 (LIPYFNLTYAQNFGAAFSFLA), 70-90 (WFFAFIAVAISVVLMVMMYRA), and 102-122 (ALIIGGALGNLFDRLVHGFVI). Residues Asp-123 and Asp-141 contribute to the active site. A helical membrane pass occupies residues 137 to 157 (FNIADMAICIGAGLVIIDSFL).

This sequence belongs to the peptidase A8 family.

It localises to the cell inner membrane. The catalysed reaction is Release of signal peptides from bacterial membrane prolipoproteins. Hydrolyzes -Xaa-Yaa-Zaa-|-(S,diacylglyceryl)Cys-, in which Xaa is hydrophobic (preferably Leu), and Yaa (Ala or Ser) and Zaa (Gly or Ala) have small, neutral side chains.. It functions in the pathway protein modification; lipoprotein biosynthesis (signal peptide cleavage). Its function is as follows. This protein specifically catalyzes the removal of signal peptides from prolipoproteins. The protein is Lipoprotein signal peptidase of Photorhabdus laumondii subsp. laumondii (strain DSM 15139 / CIP 105565 / TT01) (Photorhabdus luminescens subsp. laumondii).